A 142-amino-acid polypeptide reads, in one-letter code: Peptide methionine sulfoxide reductase MsrB (142 aa).

Residues Leu-2–Tyr-125 enclose the MsrB domain. Catalysis depends on Cys-114, which acts as the Nucleophile.

Belongs to the MsrB Met sulfoxide reductase family.

It catalyses the reaction L-methionyl-[protein] + [thioredoxin]-disulfide + H2O = L-methionyl-(R)-S-oxide-[protein] + [thioredoxin]-dithiol. In Staphylococcus aureus (strain Mu3 / ATCC 700698), this protein is Peptide methionine sulfoxide reductase MsrB.